The following is a 457-amino-acid chain: Cysteine--tRNA ligase (457 aa).

Cys28 lines the Zn(2+) pocket. The 'HIGH' region signature appears at 30 to 40; the sequence is ITVYDLCHIGH. Zn(2+) contacts are provided by Cys209, His234, and Glu238. Positions 266–270 match the 'KMSKS' region motif; sequence KMSKS. Position 269 (Lys269) interacts with ATP.

The protein belongs to the class-I aminoacyl-tRNA synthetase family. In terms of assembly, monomer. Requires Zn(2+) as cofactor.

The protein resides in the cytoplasm. It carries out the reaction tRNA(Cys) + L-cysteine + ATP = L-cysteinyl-tRNA(Cys) + AMP + diphosphate. This is Cysteine--tRNA ligase from Sodalis glossinidius (strain morsitans).